Consider the following 391-residue polypeptide: 1-deoxy-D-xylulose 5-phosphate reductoisomerase (391 aa).

Positions 10, 11, 12, 13, 38, and 122 each coordinate NADPH. Residue K123 participates in 1-deoxy-D-xylulose 5-phosphate binding. E124 contributes to the NADPH binding site. D148 contributes to the Mn(2+) binding site. S149, E150, S173, and H196 together coordinate 1-deoxy-D-xylulose 5-phosphate. A Mn(2+)-binding site is contributed by E150. Position 202 (G202) interacts with NADPH. Residues S209, N214, K215, and E218 each coordinate 1-deoxy-D-xylulose 5-phosphate. E218 serves as a coordination point for Mn(2+).

It belongs to the DXR family. It depends on Mg(2+) as a cofactor. Mn(2+) serves as cofactor.

The catalysed reaction is 2-C-methyl-D-erythritol 4-phosphate + NADP(+) = 1-deoxy-D-xylulose 5-phosphate + NADPH + H(+). The protein operates within isoprenoid biosynthesis; isopentenyl diphosphate biosynthesis via DXP pathway; isopentenyl diphosphate from 1-deoxy-D-xylulose 5-phosphate: step 1/6. Catalyzes the NADPH-dependent rearrangement and reduction of 1-deoxy-D-xylulose-5-phosphate (DXP) to 2-C-methyl-D-erythritol 4-phosphate (MEP). The chain is 1-deoxy-D-xylulose 5-phosphate reductoisomerase from Wolbachia pipientis subsp. Culex pipiens (strain wPip).